A 262-amino-acid chain; its full sequence is Putative hydro-lyase BLi00500/BL02808 (262 aa).

The protein belongs to the D-glutamate cyclase family.

In Bacillus licheniformis (strain ATCC 14580 / DSM 13 / JCM 2505 / CCUG 7422 / NBRC 12200 / NCIMB 9375 / NCTC 10341 / NRRL NRS-1264 / Gibson 46), this protein is Putative hydro-lyase BLi00500/BL02808.